The following is a 380-amino-acid chain: Cytochrome b (380 aa).

A run of 4 helical transmembrane segments spans residues 28–48, 72–93, 109–129, and 174–194; these read IGSLLGLLLAMQIMTGIFLSL, WLVRASHANGASMFFMLMYAHI, WLVGGNDFLLSMATAFLGYVL, and FYSFHFLLPFVILVFVLVHLL. Heme b is bound by residues His-78 and His-92. Residues His-178 and His-192 each contribute to the heme b site. His-197 is an a ubiquinone binding site. The next 4 helical transmembrane spans lie at 222-243, 285-305, 317-337, and 344-364; these read WKILWVFVLLCFLLYVLLCYIT, IGGVVALAMSVLYLYTFPLAL, IGQLLFWGYVSLFFLLTWLGA, and YISLALPLTVMFFVVPGLYMI.

Belongs to the cytochrome b family. In terms of assembly, the main subunits of complex b-c1 are: cytochrome b, cytochrome c1 and the Rieske protein. It depends on heme b as a cofactor.

The protein resides in the mitochondrion inner membrane. In terms of biological role, component of the ubiquinol-cytochrome c reductase complex (complex III or cytochrome b-c1 complex) that is part of the mitochondrial respiratory chain. The b-c1 complex mediates electron transfer from ubiquinol to cytochrome c. Contributes to the generation of a proton gradient across the mitochondrial membrane that is then used for ATP synthesis. The sequence is that of Cytochrome b (MT-CYB) from Cepaea nemoralis (Banded wood snail).